A 183-amino-acid chain; its full sequence is Small ribosomal subunit protein bS20c (183 aa).

Residues 1–68 (MAAISMACVS…FQRRGFSVVC (68 aa)) constitute a chloroplast transit peptide. The disordered stretch occupies residues 79–99 (AAKRTRQAETRRLRNKARKSE).

Component of the chloroplast small ribosomal subunit (SSU). Mature 70S chloroplast ribosomes of higher plants consist of a small (30S) and a large (50S) subunit. The 30S small subunit contains 1 molecule of ribosomal RNA (16S rRNA) and 24 different proteins. The 50S large subunit contains 3 rRNA molecules (23S, 5S and 4.5S rRNA) and 33 different proteins.

It localises to the plastid. The protein localises to the chloroplast. Its function is as follows. Component of the chloroplast ribosome (chloro-ribosome), a dedicated translation machinery responsible for the synthesis of chloroplast genome-encoded proteins, including proteins of the transcription and translation machinery and components of the photosynthetic apparatus. In Spinacia oleracea (Spinach), this protein is Small ribosomal subunit protein bS20c (RPS20).